We begin with the raw amino-acid sequence, 29 residues long: Brevinin-2Rc (29 aa).

A disulfide bridge links cysteine 23 with cysteine 29.

Expressed by the skin glands.

The protein localises to the secreted. Functionally, antimicrobial peptide. In Pelophylax ridibundus (Marsh frog), this protein is Brevinin-2Rc.